A 630-amino-acid polypeptide reads, in one-letter code: A-type voltage-gated potassium channel KCND2 (630 aa).

Topologically, residues 1–184 are cytoplasmic; that stretch reads MAAGVAAWLP…FENPHTSTMA (184 aa). The tract at residues 2–20 is interaction with KCNIP1, KCNIP2, and other family members; it reads AAGVAAWLPFARAAAIGWM. Thr-38 carries the post-translational modification Phosphothreonine. An interaction with KCNIP1 region spans residues 71 to 90; sequence ERDFFYHPETQQYFFDRDPD. His-105, Cys-111, Cys-132, and Cys-133 together coordinate Zn(2+). A helical transmembrane segment spans residues 185–206; that stretch reads LVFYYVTGFFIAVSVIANVVET. The Extracellular portion of the chain corresponds to 207-226; it reads VPCGSSPGHIKELPCGERYA. The chain crosses the membrane as a helical span at residues 227–249; sequence VAFFCLDTACVMIFTVEYLLRLA. The Cytoplasmic segment spans residues 250-256; that stretch reads AAPSRYR. The helical transmembrane segment at 257–281 threads the bilayer; that stretch reads FVRSVMSIIDVVAILPYYIGLVMTD. Residues 282-287 lie on the Extracellular side of the membrane; the sequence is NEDVSG. Residues 288-307 form a helical; Voltage-sensor membrane-spanning segment; that stretch reads AFVTLRVFRVFRIFKFSRHS. Over 308-321 the chain is Cytoplasmic; it reads QGLRILGYTLKSCA. The tract at residues 308–321 is S4-S5 linker; that stretch reads QGLRILGYTLKSCA. A helical transmembrane segment spans residues 322–345; sequence SELGFLLFSLTMAIIIFATVMFYA. The Extracellular portion of the chain corresponds to 346–357; sequence EKGSSASKFTSI. An intramembrane region (helical) is located at residues 358 to 369; that stretch reads PAAFWYTIVTMT. 4 residues coordinate K(+): Thr-370, Leu-371, Gly-372, and Tyr-373. The Selectivity filter motif lies at 370–375; sequence TLGYGD. An intramembrane segment occupies 370-377; that stretch reads TLGYGDMV. Over 378–380 the chain is Extracellular; sequence PKT. Residues 381 to 403 form a helical membrane-spanning segment; it reads IAGKIFGSICSLSGVLVIALPVP. Topologically, residues 404–630 are cytoplasmic; sequence VIVSNFSRIY…GGNIVRVSAL (227 aa). A required for dendritic targeting region spans residues 474-489; sequence FETQHHHLLHCLEKTT. The tract at residues 474 to 630 is important for normal channel activation and inactivation, for interaction with KCNIP2, and probably other family members as well; sequence FETQHHHLLH…GGNIVRVSAL (157 aa). Residues Ser-548, Ser-552, Ser-572, and Ser-575 each carry the phosphoserine modification. The tract at residues 600–622 is disordered; sequence IPTPPVTTPEGDDRPESPEYSGG. Thr-602 and Thr-607 each carry phosphothreonine. Residue Ser-616 is modified to Phosphoserine. The PDZ-binding motif lies at 627-630; that stretch reads VSAL.

Belongs to the potassium channel family. D (Shal) (TC 1.A.1.2) subfamily. Kv4.2/KCND2 sub-subfamily. In terms of assembly, homotetramer or heterotetramer with KCND1 or KCND3. Associates with the regulatory subunits KCNIP2, KCNIP3 and KCNIP4. Interacts with the regulatory subunit KCNIP1; this interaction mediates the capture of both the N- and C-terminus of KCND2, preventing N-type inactivation and stabilizing the S6 conformation, thereby accelerating closed state inactivation and recovery. In vivo, probably exists as heteromeric complex containing variable proportions of KCND1, KCND2, KCND3, KCNIP1, KCNIP2, KCNIP3, KCNIP4, DPP6 and DPP10. The tetrameric channel can associate with up to four regulatory subunits, such as KCNIP2 or KCNIP4. Interaction with four KCNIP4 chains does not reduce interaction with DPP10. Interacts with DLG4 and NCS1/FREQ. Interacts with DLG1. Probably part of a complex consisting of KCNIP1, KCNIP2 isoform 3 and KCND2. Interacts with FLNA, FLNC and DPP10. Identified in a complex with cAMP-dependent protein kinase (PKA), CAV3, AKAP6 and KCND3 in cardiac myocytes. Interacts (via S1 and S2 helices) with DPP6; this interaction stabilizes the conformation of the S1-S2 helices and facilitates S4 conformational change, including S4 sliding up and down, thereby accelerating activation, inactivation, and recovery. In terms of processing, phosphorylation in response to MAPK activation is increased in stimulated dendrites. Interaction with KCNIP2 and DPP6 propomtes phosphorylation by PKA at Ser-552. Phosphorylation at Ser-552 has no effect on interaction with KCNIP3, but is required for the regulation of channel activity by KCNIP3. Phosphorylation at Ser-552 leads to KCND2 internalization. Phosphorylated by MAPK in response to signaling via the metabotropic glutamate receptor GRM5. Phosphorylation at Ser-616 is required for the down-regulation of neuronal A-type currents in response to signaling via GRM5.

The protein localises to the cell membrane. Its subcellular location is the cell projection. It is found in the dendrite. It localises to the synapse. The protein resides in the perikaryon. The protein localises to the postsynaptic cell membrane. Its subcellular location is the dendritic spine. It is found in the sarcolemma. It localises to the cell junction. The protein resides in the membrane. The protein localises to the caveola. The catalysed reaction is K(+)(in) = K(+)(out). In terms of biological role, voltage-gated potassium channel that mediates transmembrane potassium transport in excitable membranes, primarily in the brain, but also in rodent heart. Mediates the major part of the dendritic A-type current I(SA) in brain neurons. This current is activated at membrane potentials that are below the threshold for action potentials. It regulates neuronal excitability, prolongs the latency before the first spike in a series of action potentials, regulates the frequency of repetitive action potential firing, shortens the duration of action potentials and regulates the back-propagation of action potentials from the neuronal cell body to the dendrites. Contributes to the regulation of the circadian rhythm of action potential firing in suprachiasmatic nucleus neurons, which regulates the circadian rhythm of locomotor activity. Functions downstream of the metabotropic glutamate receptor GRM5 and plays a role in neuronal excitability and in nociception mediated by activation of GRM5. Mediates the transient outward current I(to) in rodent heart left ventricle apex cells, but not in human heart, where this current is mediated by another family member. Forms tetrameric potassium-selective channels through which potassium ions pass in accordance with their electrochemical gradient. The channel alternates between opened and closed conformations in response to the voltage difference across the membrane. Can form functional homotetrameric channels and heterotetrameric channels that contain variable proportions of KCND2 and KCND3; channel properties depend on the type of pore-forming alpha subunits that are part of the channel. In vivo, membranes probably contain a mixture of heteromeric potassium channel complexes. Interaction with specific isoforms of the regulatory subunits KCNIP1, KCNIP2, KCNIP3 or KCNIP4 strongly increases expression at the cell surface and thereby increases channel activity; it modulates the kinetics of channel activation and inactivation, shifts the threshold for channel activation to more negative voltage values, shifts the threshold for inactivation to less negative voltages and accelerates recovery after inactivation. Likewise, interaction with DPP6 or DPP10 promotes expression at the cell membrane and regulates both channel characteristics and activity. Upon depolarization, the channel goes from a resting closed state (C state) to an activated but non-conducting state (C* state), from there, the channel may either inactivate (I state) or open (O state). The polypeptide is A-type voltage-gated potassium channel KCND2 (Mustela putorius furo (European domestic ferret)).